The following is a 355-amino-acid chain: Probable dual-specificity RNA methyltransferase RlmN (355 aa).

Catalysis depends on Glu-89, which acts as the Proton acceptor. In terms of domain architecture, Radical SAM core spans 95–322; that stretch reads YENRKTVCLS…KRLGVPTSIR (228 aa). A disulfide bond links Cys-102 and Cys-333. [4Fe-4S] cluster is bound by residues Cys-109, Cys-113, and Cys-116. Residues 159 to 160, Ser-191, 214 to 216, and Asn-290 contribute to the S-adenosyl-L-methionine site; these read GE and SLH. Residue Cys-333 is the S-methylcysteine intermediate of the active site.

This sequence belongs to the radical SAM superfamily. RlmN family. It depends on [4Fe-4S] cluster as a cofactor.

The protein resides in the cytoplasm. The catalysed reaction is adenosine(2503) in 23S rRNA + 2 reduced [2Fe-2S]-[ferredoxin] + 2 S-adenosyl-L-methionine = 2-methyladenosine(2503) in 23S rRNA + 5'-deoxyadenosine + L-methionine + 2 oxidized [2Fe-2S]-[ferredoxin] + S-adenosyl-L-homocysteine. It catalyses the reaction adenosine(37) in tRNA + 2 reduced [2Fe-2S]-[ferredoxin] + 2 S-adenosyl-L-methionine = 2-methyladenosine(37) in tRNA + 5'-deoxyadenosine + L-methionine + 2 oxidized [2Fe-2S]-[ferredoxin] + S-adenosyl-L-homocysteine. Functionally, specifically methylates position 2 of adenine 2503 in 23S rRNA and position 2 of adenine 37 in tRNAs. The protein is Probable dual-specificity RNA methyltransferase RlmN of Thermus thermophilus (strain ATCC BAA-163 / DSM 7039 / HB27).